The following is a 98-amino-acid chain: MSITTLNIMVAFTMALLGMFTYRSHLMSSLLCLEGMMLSLFMLATIVSLNMNFTISFMFPVILLVFAACEAAVGLALLVMVSNTYGMDYIHNLNLLQC.

3 consecutive transmembrane segments (helical) span residues 1 to 21 (MSITTLNIMVAFTMALLGMFT), 29 to 49 (SLLCLEGMMLSLFMLATIVSL), and 61 to 81 (VILLVFAACEAAVGLALLVMV).

This sequence belongs to the complex I subunit 4L family. As to quaternary structure, core subunit of respiratory chain NADH dehydrogenase (Complex I) which is composed of 45 different subunits.

The protein localises to the mitochondrion inner membrane. It catalyses the reaction a ubiquinone + NADH + 5 H(+)(in) = a ubiquinol + NAD(+) + 4 H(+)(out). Core subunit of the mitochondrial membrane respiratory chain NADH dehydrogenase (Complex I) which catalyzes electron transfer from NADH through the respiratory chain, using ubiquinone as an electron acceptor. Part of the enzyme membrane arm which is embedded in the lipid bilayer and involved in proton translocation. The chain is NADH-ubiquinone oxidoreductase chain 4L (MT-ND4L) from Ochotona collaris (Collared pika).